The primary structure comprises 57 residues: Small hydrophobic protein (57 aa).

Over Met1–Leu8 the chain is Virion surface. Residues Tyr9–Ile29 form a helical membrane-spanning segment. Residues Leu30–Leu57 are Intravirion-facing.

The protein belongs to the rubulavirus small hydrophobic protein family. In terms of assembly, interacts with host TNFRSF1A, RIPK1 and IRAK1; these interactions interfere with host NF-kappa-B activation at the level of receptor complexes. Interacts with host protein UBQLN4.

Its subcellular location is the virion membrane. It localises to the host cell membrane. In terms of biological role, plays a role in the inhibition of the host NF-kappa-B pathway. This inhibition occurs at the receptor level, by preventing the signaling of TNFR1 as well as IL-1R and TLR3. The chain is Small hydrophobic protein (SH) from Mumps virus genotype A (strain Jeryl-Lynn) (MuV).